The sequence spans 198 residues: HTH-type transcriptional repressor DhaR (198 aa).

Positions 4–64 (TPVRQHLVEK…QVLQEFFSDL (61 aa)) constitute an HTH tetR-type domain.

In terms of biological role, transcriptional repressor for the dhaA haloalkane dehalogenase gene. In Mycobacterium sp. (strain GP1), this protein is HTH-type transcriptional repressor DhaR (dhaR).